The chain runs to 343 residues: Retroviral-like aspartic protease 1 (343 aa).

Topologically, residues M1–P55 are cytoplasmic. The propeptide occupies M1 to N190. A helical transmembrane segment spans residues F56–A76. The Extracellular segment spans residues E77–H343. Residues V207–V288 form the Peptidase A2 domain. Residue D212 is part of the active site. The N-linked (GlcNAc...) asparagine glycan is linked to N276. A propeptide spanning residues L327–H343 is cleaved from the precursor.

As to quaternary structure, homodimer. Post-translationally, undergoes autocleavage which is necessary for activation of the protein. Expressed primarily in the granular layer of the epidermis and inner root sheath of hair follicles. In psoriatic skin, expressed throughout the stratum corneum. In ulcerated skin, expressed in the stratum granulosum of intact epidermis but almost absent from ulcerated regions. Expressed in differentiated areas of squamous cell carcinomas but not in undifferentiated tumors.

The protein localises to the membrane. Functionally, protease responsible for filaggrin processing, essential for the maintenance of a proper epidermis organization. This is Retroviral-like aspartic protease 1 from Homo sapiens (Human).